Consider the following 213-residue polypeptide: Uridine kinase (213 aa).

15–22 (GASASGKS) provides a ligand contact to ATP.

The protein belongs to the uridine kinase family.

It is found in the cytoplasm. It catalyses the reaction uridine + ATP = UMP + ADP + H(+). It carries out the reaction cytidine + ATP = CMP + ADP + H(+). It functions in the pathway pyrimidine metabolism; CTP biosynthesis via salvage pathway; CTP from cytidine: step 1/3. The protein operates within pyrimidine metabolism; UMP biosynthesis via salvage pathway; UMP from uridine: step 1/1. This chain is Uridine kinase, found in Salmonella newport (strain SL254).